A 448-amino-acid polypeptide reads, in one-letter code: Ribulose bisphosphate carboxylase large chain (448 aa).

Residues 1-2 (MS) constitute a propeptide that is removed on maturation. N-acetylproline is present on Pro-3. The residue at position 14 (Lys-14) is an N6,N6,N6-trimethyllysine. Asn-122 and Thr-172 together coordinate substrate. Lys-174 acts as the Proton acceptor in catalysis. Residue Lys-176 participates in substrate binding. Residues Lys-200, Asp-202, and Glu-203 each coordinate Mg(2+). Lys-200 is modified (N6-carboxylysine). His-293 serves as the catalytic Proton acceptor. Substrate contacts are provided by Arg-294, His-326, and Ser-378.

Belongs to the RuBisCO large chain family. Type I subfamily. As to quaternary structure, heterohexadecamer of 8 large chains and 8 small chains; disulfide-linked. The disulfide link is formed within the large subunit homodimers. It depends on Mg(2+) as a cofactor. The disulfide bond which can form in the large chain dimeric partners within the hexadecamer appears to be associated with oxidative stress and protein turnover.

The protein localises to the plastid. The protein resides in the chloroplast. It catalyses the reaction 2 (2R)-3-phosphoglycerate + 2 H(+) = D-ribulose 1,5-bisphosphate + CO2 + H2O. It carries out the reaction D-ribulose 1,5-bisphosphate + O2 = 2-phosphoglycolate + (2R)-3-phosphoglycerate + 2 H(+). Functionally, ruBisCO catalyzes two reactions: the carboxylation of D-ribulose 1,5-bisphosphate, the primary event in carbon dioxide fixation, as well as the oxidative fragmentation of the pentose substrate in the photorespiration process. Both reactions occur simultaneously and in competition at the same active site. The chain is Ribulose bisphosphate carboxylase large chain from Dichapetalum crassifolium.